Here is a 795-residue protein sequence, read N- to C-terminus: Probable alpha,alpha-trehalose-phosphate synthase [UDP-forming] 4 (795 aa).

The glycosyltransferase stretch occupies residues 4 to 469 (PRLLVVSMSL…WADDFMKLTL (466 aa)).

The protein in the N-terminal section; belongs to the glycosyltransferase 20 family. It in the C-terminal section; belongs to the trehalose phosphatase family.

It carries out the reaction D-glucose 6-phosphate + UDP-alpha-D-glucose = alpha,alpha-trehalose 6-phosphate + UDP + H(+). This Arabidopsis thaliana (Mouse-ear cress) protein is Probable alpha,alpha-trehalose-phosphate synthase [UDP-forming] 4 (TPS4).